The following is a 597-amino-acid chain: Bile salt-activated lipase (597 aa).

Residues 1 to 18 form the signal peptide; that stretch reads LGASRLGPSPGCLAVASA. Cys82 and Cys98 form a disulfide bridge. A glycan (N-linked (GlcNAc...) asparagine) is linked at Asn205. The active-site Acyl-ester intermediate is the Ser212. Residues Cys264 and Cys275 are joined by a disulfide bond. Residue Asp338 is the Charge relay system of the active site. A glycan (N-linked (GlcNAc...) asparagine) is linked at Asn379. The active-site Charge relay system is His453. The segment at 553–591 is disordered; the sequence is AGASLLPPEDNSQASPVPPADNSGAPTEPSAGDSEVAQM.

Belongs to the type-B carboxylesterase/lipase family. As to quaternary structure, interacts with CLC.

It localises to the secreted. It catalyses the reaction a triacylglycerol + H2O = a diacylglycerol + a fatty acid + H(+). The enzyme catalyses 1,2,3-tri-(9Z-octadecenoyl)-glycerol + H2O = di-(9Z)-octadecenoylglycerol + (9Z)-octadecenoate + H(+). The catalysed reaction is 1,2,3-trioctanoylglycerol + H2O = dioctanoylglycerol + octanoate + H(+). It carries out the reaction a sterol ester + H2O = a sterol + a fatty acid + H(+). It catalyses the reaction cholesteryl (9Z-octadecenoate) + H2O = cholesterol + (9Z)-octadecenoate + H(+). The enzyme catalyses an acetyl ester + H2O = an aliphatic alcohol + acetate + H(+). The catalysed reaction is a butanoate ester + H2O = an aliphatic alcohol + butanoate + H(+). It carries out the reaction 9-hexadecanoyloxy-octadecanoate + H2O = 9-hydroxy-octadecanoate + hexadecanoate + H(+). It catalyses the reaction 9-(9Z-octadecenoyloxy)-octadecanoate + H2O = 9-hydroxy-octadecanoate + (9Z)-octadecenoate + H(+). The enzyme catalyses 1-hexadecanoyl-sn-glycero-3-phosphocholine + H2O = sn-glycerol 3-phosphocholine + hexadecanoate + H(+). The catalysed reaction is 12-hexadecanoyloxy-octadecanoate + H2O = 12-hydroxyoctadecanoate + hexadecanoate + H(+). It carries out the reaction 12-(9Z-octadecenoyloxy)-octadecanoate + H2O = 12-hydroxyoctadecanoate + (9Z)-octadecenoate + H(+). It catalyses the reaction 13-(9Z-octadecenoyloxy)-octadecanoate + H2O = 13-hydroxy-octadecanoate + (9Z)-octadecenoate + H(+). The enzyme catalyses 9-(9Z-hexadecenoyloxy)-octadecanoate + H2O = (9Z)-hexadecenoate + 9-hydroxy-octadecanoate + H(+). The catalysed reaction is 12-(9Z-hexadecenoyloxy)-octadecanoate + H2O = 12-hydroxyoctadecanoate + (9Z)-hexadecenoate + H(+). It carries out the reaction 13-(9Z-hexadecenoyloxy)-octadecanoate + H2O = 13-hydroxy-octadecanoate + (9Z)-hexadecenoate + H(+). It catalyses the reaction 12-octadecanoyloxy-octadecanoate + H2O = 12-hydroxyoctadecanoate + octadecanoate + H(+). The enzyme catalyses 13-octadecanoyloxy-octadecanoate + H2O = 13-hydroxy-octadecanoate + octadecanoate + H(+). The catalysed reaction is 5-(9Z-hexadecenoyloxy)-octadecanoate + H2O = 5-hydroxy-octadecanoate + (9Z)-hexadecenoate + H(+). It carries out the reaction 9-octadecanoyloxy-octadecanoate + H2O = 9-hydroxy-octadecanoate + octadecanoate + H(+). Its activity is regulated as follows. Activated by bile salts such as sodium taurocholate. In terms of biological role, catalyzes the hydrolysis of a wide range of substrates including cholesteryl esters, phospholipids, lysophospholipids, di- and tri-acylglycerols, and fatty acid esters of hydroxy fatty acids (FAHFA). Preferentially hydrolyzes FAHFAs with the ester bond further away from the carboxylate. Unsaturated FAHFAs are hydrolyzed more quickly than saturated FAHFAs. Has an essential role in the complete digestion of dietary lipids and their intestinal absorption, along with the absorption of fat-soluble vitamins. The chain is Bile salt-activated lipase (CEL) from Bos taurus (Bovine).